Here is a 299-residue protein sequence, read N- to C-terminus: Sodium/potassium-transporting ATPase subunit beta-2 (299 aa).

At 1–36 (MAALTQKKTCSQMMEEWKEFMWNPRTREFMGRTGSS) the chain is on the cytoplasmic side. Residues 37–57 (WALILLFYVVFYAFLTAVFSL) traverse the membrane as a helical; Signal-anchor for type II membrane protein segment. Over 58–299 (SLWVMLQTID…VIFTMKIDRL (242 aa)) the chain is Extracellular. N-linked (GlcNAc...) asparagine glycans are attached at residues Asn-101 and Asn-119. 2 cysteine pairs are disulfide-bonded: Cys-130–Cys-152 and Cys-162–Cys-178. N-linked (GlcNAc...) asparagine glycans are attached at residues Asn-199, Asn-226, Asn-247, and Asn-259. A disulfide bridge connects residues Cys-206 and Cys-270.

The protein belongs to the X(+)/potassium ATPases subunit beta family. In terms of assembly, the sodium/potassium-transporting ATPase is composed of a catalytic alpha subunit, an auxiliary non-catalytic beta subunit and an additional regulatory subunit. Expressed at a high level in bladder epithelial cells and eye and at a trace level in kidney; it is not detectable in significant amounts in the stomach, colon and small intestine.

Its subcellular location is the cell membrane. This is the non-catalytic component of the active enzyme, which catalyzes the hydrolysis of ATP coupled with the exchange of Na(+) and K(+) ions across the plasma membrane. The exact function of this glycoprotein is not known. Some specific sequence of the beta subunit can modulate the activation of the Na,K-pump by extracellular potassium ions. The chain is Sodium/potassium-transporting ATPase subunit beta-2 from Rhinella marina (Cane toad).